A 146-amino-acid polypeptide reads, in one-letter code: Acidic phospholipase A2 2 (146 aa).

The N-terminal stretch at 1-21 (MNPAHLLILAAVCVSSLGASS) is a signal peptide. Residues 22–27 (NRPMPL) constitute a propeptide that is removed on maturation. 7 disulfide bridges follow: cysteine 38–cysteine 98, cysteine 53–cysteine 145, cysteine 55–cysteine 71, cysteine 70–cysteine 126, cysteine 77–cysteine 119, cysteine 87–cysteine 112, and cysteine 105–cysteine 117. Ca(2+) contacts are provided by tyrosine 54, glycine 56, and glycine 58. The active site involves histidine 74. Aspartate 75 contacts Ca(2+). Aspartate 120 is a catalytic residue.

This sequence belongs to the phospholipase A2 family. Group I subfamily. D49 sub-subfamily. Ca(2+) is required as a cofactor. As to expression, expressed by the venom gland.

Its subcellular location is the secreted. The catalysed reaction is a 1,2-diacyl-sn-glycero-3-phosphocholine + H2O = a 1-acyl-sn-glycero-3-phosphocholine + a fatty acid + H(+). Its function is as follows. PLA2 catalyzes the calcium-dependent hydrolysis of the 2-acyl groups in 3-sn-phosphoglycerides. In Naja kaouthia (Monocled cobra), this protein is Acidic phospholipase A2 2.